Reading from the N-terminus, the 218-residue chain is Serine/threonine-protein phosphatase 2 (218 aa).

Residues D22, H24, D51, and N77 each coordinate Mn(2+). H78 (proton donor) is an active-site residue. A Mn(2+)-binding site is contributed by H187.

The protein belongs to the PPP phosphatase family. PP-1 subfamily. It depends on Mn(2+) as a cofactor.

It catalyses the reaction O-phospho-L-seryl-[protein] + H2O = L-seryl-[protein] + phosphate. The enzyme catalyses O-phospho-L-threonyl-[protein] + H2O = L-threonyl-[protein] + phosphate. Its activity is regulated as follows. Inhibited by cadmium, copper, zinc when added activity but with less efficiency. Can hydrolyze phosphorylated Ser-, Thr- or Tyr-substrates in vitro. The natural substrate is unknown. This is Serine/threonine-protein phosphatase 2 (pphB) from Salmonella typhimurium (strain LT2 / SGSC1412 / ATCC 700720).